The primary structure comprises 138 residues: U1 small nuclear ribonucleoprotein C (138 aa).

The Matrin-type zinc-finger motif lies at 4–36 (YYCDYCDTFLTHDSPSVRKTHNNGRKHKENVRF). The tract at residues 58–138 (QSKPNSQMPP…MGRPPMSLRS (81 aa)) is disordered. Pro residues predominate over residues 67-109 (PNAPPGLMPPPGMLPPPGGMPPGRMPPQGLPFPPPGPIPPPPG). Residues 113-138 (MRPPHGQMHMGGPRPQMGRPPMSLRS) show a composition bias toward low complexity.

This sequence belongs to the U1 small nuclear ribonucleoprotein C family. As to quaternary structure, U1 snRNP is composed of the 7 core Sm proteins B/B', D1, D2, D3, E, F and G that assemble in a heptameric protein ring on the Sm site of the small nuclear RNA to form the core snRNP, and at least 3 U1 snRNP-specific proteins U1-70K, U1-A and U1-C. U1-C interacts with U1 snRNA and the 5' splice-site region of the pre-mRNA.

It is found in the nucleus. Functionally, component of the spliceosomal U1 snRNP, which is essential for recognition of the pre-mRNA 5' splice-site and the subsequent assembly of the spliceosome. U1-C is directly involved in initial 5' splice-site recognition for both constitutive and regulated alternative splicing. The interaction with the 5' splice-site seems to precede base-pairing between the pre-mRNA and the U1 snRNA. Stimulates commitment or early (E) complex formation by stabilizing the base pairing of the 5' end of the U1 snRNA and the 5' splice-site region. The protein is U1 small nuclear ribonucleoprotein C of Nematostella vectensis (Starlet sea anemone).